A 247-amino-acid polypeptide reads, in one-letter code: Adenosylcobinamide-GDP ribazoletransferase (247 aa).

Helical transmembrane passes span 34 to 54, 59 to 79, 113 to 133, 138 to 158, and 194 to 214; these read IITF…VFMA, FGVP…TGGF, GGLA…ELAL, ILAS…LLMY, and VLLP…AIFI.

The protein belongs to the CobS family. It depends on Mg(2+) as a cofactor.

It localises to the cell inner membrane. It carries out the reaction alpha-ribazole + adenosylcob(III)inamide-GDP = adenosylcob(III)alamin + GMP + H(+). The enzyme catalyses alpha-ribazole 5'-phosphate + adenosylcob(III)inamide-GDP = adenosylcob(III)alamin 5'-phosphate + GMP + H(+). It functions in the pathway cofactor biosynthesis; adenosylcobalamin biosynthesis; adenosylcobalamin from cob(II)yrinate a,c-diamide: step 7/7. Joins adenosylcobinamide-GDP and alpha-ribazole to generate adenosylcobalamin (Ado-cobalamin). Also synthesizes adenosylcobalamin 5'-phosphate from adenosylcobinamide-GDP and alpha-ribazole 5'-phosphate. The protein is Adenosylcobinamide-GDP ribazoletransferase of Escherichia coli O17:K52:H18 (strain UMN026 / ExPEC).